The following is a 182-amino-acid chain: Dual-action ribosomal maturation protein DarP (182 aa).

It belongs to the DarP family.

Its subcellular location is the cytoplasm. Its function is as follows. Member of a network of 50S ribosomal subunit biogenesis factors which assembles along the 30S-50S interface, preventing incorrect 23S rRNA structures from forming. Promotes peptidyl transferase center (PTC) maturation. In Yersinia pseudotuberculosis serotype O:1b (strain IP 31758), this protein is Dual-action ribosomal maturation protein DarP.